The primary structure comprises 310 residues: Nuclear hormone receptor family member nhr-89 (310 aa).

Residues 5–79 constitute a DNA-binding region (nuclear receptor); it reads EGPCRVCHSV…SGMRRDCVRK (75 aa). 2 consecutive NR C4-type zinc fingers follow at residues 8–29 and 43–67; these read CRVCHSVKGTRRHFGITACMSC and CPANNSCTILDDQKQFCRSCRYNKC. In terms of domain architecture, NR LBD spans 101–310; it reads KLSESYEELL…TLHQKYQIPF (210 aa).

Belongs to the nuclear hormone receptor family.

It localises to the nucleus. Functionally, orphan nuclear receptor. In Caenorhabditis elegans, this protein is Nuclear hormone receptor family member nhr-89 (nhr-89).